Here is a 250-residue protein sequence, read N- to C-terminus: UDP-2,3-diacylglucosamine hydrolase (250 aa).

Aspartate 7, histidine 9, aspartate 40, asparagine 78, and histidine 113 together coordinate Mn(2+). Residue 78–79 (NR) coordinates substrate. Substrate-binding residues include aspartate 121, serine 159, threonine 163, lysine 166, and histidine 194. Mn(2+) is bound by residues histidine 194 and histidine 196.

The protein belongs to the LpxH family. Mn(2+) is required as a cofactor.

Its subcellular location is the cell inner membrane. It catalyses the reaction UDP-2-N,3-O-bis[(3R)-3-hydroxytetradecanoyl]-alpha-D-glucosamine + H2O = 2-N,3-O-bis[(3R)-3-hydroxytetradecanoyl]-alpha-D-glucosaminyl 1-phosphate + UMP + 2 H(+). Its pathway is glycolipid biosynthesis; lipid IV(A) biosynthesis; lipid IV(A) from (3R)-3-hydroxytetradecanoyl-[acyl-carrier-protein] and UDP-N-acetyl-alpha-D-glucosamine: step 4/6. In terms of biological role, hydrolyzes the pyrophosphate bond of UDP-2,3-diacylglucosamine to yield 2,3-diacylglucosamine 1-phosphate (lipid X) and UMP by catalyzing the attack of water at the alpha-P atom. Involved in the biosynthesis of lipid A, a phosphorylated glycolipid that anchors the lipopolysaccharide to the outer membrane of the cell. The chain is UDP-2,3-diacylglucosamine hydrolase from Pseudomonas fluorescens (strain ATCC BAA-477 / NRRL B-23932 / Pf-5).